The following is a 146-amino-acid chain: Large ribosomal subunit protein uL15 (146 aa).

Residues 1–13 (MKLHELRPAEGSR) show a composition bias toward basic and acidic residues. The segment at 1–55 (MKLHELRPAEGSRKSPKRVGRGTGSGLGKTSARGENGQNSRSGGGVRPGFEGGQM) is disordered. Over residues 42–52 (SGGGVRPGFEG) the composition is skewed to gly residues.

The protein belongs to the universal ribosomal protein uL15 family. Part of the 50S ribosomal subunit.

Its function is as follows. Binds to the 23S rRNA. This chain is Large ribosomal subunit protein uL15, found in Clostridium tetani (strain Massachusetts / E88).